The chain runs to 315 residues: MAEKVAVIVGPTAVGKTKLGIALAKKLGGEVISGDSMQIYKGMDIGTAKVKPDEMEGIPHHLLDIKEPCEPFSVVEFQRLCRALITEISARGRLPIIVGGTGLYIQAALYDYQFSAAPSDEAYRRALKQLAAEQGAEALHRRLEAVDPISAARIHPHNIRRVIRALEVYHCTGKPFSEWQQGQSKRLLYEAAIVGLTAEREALYRRINERVDEMIAAGLIEEARALYDRGLRDCQAVQAIGYKELYDYFDGRVSLDEAIEQLKQNSRRYAKRQLTWFRNQMPVKWFDMTDAGQFAAKVEEISRYVAGKLQLEANI.

10–17 (GPTAVGKT) provides a ligand contact to ATP. Substrate is bound at residue 12 to 17 (TAVGKT). Positions 35 to 38 (DSMQ) are interaction with substrate tRNA.

It belongs to the IPP transferase family. Monomer. The cofactor is Mg(2+).

The enzyme catalyses adenosine(37) in tRNA + dimethylallyl diphosphate = N(6)-dimethylallyladenosine(37) in tRNA + diphosphate. In terms of biological role, catalyzes the transfer of a dimethylallyl group onto the adenine at position 37 in tRNAs that read codons beginning with uridine, leading to the formation of N6-(dimethylallyl)adenosine (i(6)A). The chain is tRNA dimethylallyltransferase from Geobacillus kaustophilus (strain HTA426).